The chain runs to 133 residues: Small ribosomal subunit protein uS11 (133 aa).

The protein belongs to the universal ribosomal protein uS11 family. As to quaternary structure, part of the 30S ribosomal subunit. Interacts with proteins S7 and S18. Binds to IF-3.

Its function is as follows. Located on the platform of the 30S subunit, it bridges several disparate RNA helices of the 16S rRNA. Forms part of the Shine-Dalgarno cleft in the 70S ribosome. The chain is Small ribosomal subunit protein uS11 from Brevibacillus brevis (strain 47 / JCM 6285 / NBRC 100599).